We begin with the raw amino-acid sequence, 355 residues long: 3-dehydroquinate synthase (355 aa).

Residues 71 to 76, 105 to 109, 129 to 130, lysine 142, and lysine 151 contribute to the NAD(+) site; these read EGEASK, GVVGD, and TS. Zn(2+) is bound by residues glutamate 184, histidine 246, and histidine 263.

It belongs to the sugar phosphate cyclases superfamily. Dehydroquinate synthase family. Co(2+) serves as cofactor. Zn(2+) is required as a cofactor. It depends on NAD(+) as a cofactor.

Its subcellular location is the cytoplasm. The enzyme catalyses 7-phospho-2-dehydro-3-deoxy-D-arabino-heptonate = 3-dehydroquinate + phosphate. Its pathway is metabolic intermediate biosynthesis; chorismate biosynthesis; chorismate from D-erythrose 4-phosphate and phosphoenolpyruvate: step 2/7. Functionally, catalyzes the conversion of 3-deoxy-D-arabino-heptulosonate 7-phosphate (DAHP) to dehydroquinate (DHQ). The chain is 3-dehydroquinate synthase from Streptococcus gordonii (strain Challis / ATCC 35105 / BCRC 15272 / CH1 / DL1 / V288).